The following is a 266-amino-acid chain: Methionine aminopeptidase (266 aa).

His-80 lines the substrate pocket. A divalent metal cation is bound by residues Asp-98, Asp-109, and His-172. His-179 is a substrate binding site. A divalent metal cation contacts are provided by Glu-206 and Glu-237.

The protein belongs to the peptidase M24A family. Methionine aminopeptidase type 1 subfamily. In terms of assembly, monomer. The cofactor is Co(2+). Zn(2+) serves as cofactor. Requires Mn(2+) as cofactor. Fe(2+) is required as a cofactor.

The enzyme catalyses Release of N-terminal amino acids, preferentially methionine, from peptides and arylamides.. Removes the N-terminal methionine from nascent proteins. The N-terminal methionine is often cleaved when the second residue in the primary sequence is small and uncharged (Met-Ala-, Cys, Gly, Pro, Ser, Thr, or Val). Requires deformylation of the N(alpha)-formylated initiator methionine before it can be hydrolyzed. This is Methionine aminopeptidase from Buchnera aphidicola subsp. Baizongia pistaciae (strain Bp).